Here is a 395-residue protein sequence, read N- to C-terminus: Chalcone synthase (395 aa).

Val-2 is subject to N-acetylvaline. Cys-169 is an active-site residue.

Belongs to the thiolase-like superfamily. Chalcone/stilbene synthases family.

The enzyme catalyses (E)-4-coumaroyl-CoA + 3 malonyl-CoA + 3 H(+) = 2',4,4',6'-tetrahydroxychalcone + 3 CO2 + 4 CoA. It functions in the pathway secondary metabolite biosynthesis; flavonoid biosynthesis. Its function is as follows. The primary product of this enzyme is 4,2',4',6'-tetrahydroxychalcone (also termed naringenin-chalcone or chalcone) which can under specific conditions spontaneously isomerize into naringenin. This chain is Chalcone synthase (CHS), found in Cardamine amara (Large bitter-cress).